The following is a 237-amino-acid chain: Glucosamine-6-phosphate deaminase (237 aa).

D67 acts as the Proton acceptor; for enolization step in catalysis. Catalysis depends on N136, which acts as the For ring-opening step. H138 functions as the Proton acceptor; for ring-opening step in the catalytic mechanism. Residue E143 is the For ring-opening step of the active site.

It belongs to the glucosamine/galactosamine-6-phosphate isomerase family. NagB subfamily.

The enzyme catalyses alpha-D-glucosamine 6-phosphate + H2O = beta-D-fructose 6-phosphate + NH4(+). It participates in amino-sugar metabolism; N-acetylneuraminate degradation; D-fructose 6-phosphate from N-acetylneuraminate: step 5/5. Catalyzes the reversible isomerization-deamination of glucosamine 6-phosphate (GlcN6P) to form fructose 6-phosphate (Fru6P) and ammonium ion. This chain is Glucosamine-6-phosphate deaminase, found in Lysinibacillus sphaericus (strain C3-41).